We begin with the raw amino-acid sequence, 607 residues long: Elongation factor 4 (607 aa).

The region spanning 11–193 is the tr-type G domain; it reads ENIRNFSIIA…KIVDVVPAPD (183 aa). GTP contacts are provided by residues 23–28 and 140–143; these read DHGKST and NKID.

Belongs to the TRAFAC class translation factor GTPase superfamily. Classic translation factor GTPase family. LepA subfamily.

It is found in the cell membrane. It catalyses the reaction GTP + H2O = GDP + phosphate + H(+). In terms of biological role, required for accurate and efficient protein synthesis under certain stress conditions. May act as a fidelity factor of the translation reaction, by catalyzing a one-codon backward translocation of tRNAs on improperly translocated ribosomes. Back-translocation proceeds from a post-translocation (POST) complex to a pre-translocation (PRE) complex, thus giving elongation factor G a second chance to translocate the tRNAs correctly. Binds to ribosomes in a GTP-dependent manner. The protein is Elongation factor 4 of Staphylococcus epidermidis (strain ATCC 35984 / DSM 28319 / BCRC 17069 / CCUG 31568 / BM 3577 / RP62A).